The following is a 237-amino-acid chain: D-aminoacyl-tRNA deacylase (237 aa).

This sequence belongs to the DtdA deacylase family. Monomer. It depends on Zn(2+) as a cofactor.

The catalysed reaction is a D-aminoacyl-tRNA + H2O = a tRNA + a D-alpha-amino acid + H(+). The enzyme catalyses glycyl-tRNA(Ala) + H2O = tRNA(Ala) + glycine + H(+). In terms of biological role, D-aminoacyl-tRNA deacylase with broad substrate specificity. By recycling D-aminoacyl-tRNA to D-amino acids and free tRNA molecules, this enzyme counteracts the toxicity associated with the formation of D-aminoacyl-tRNA entities in vivo. This Metallosphaera sedula (strain ATCC 51363 / DSM 5348 / JCM 9185 / NBRC 15509 / TH2) protein is D-aminoacyl-tRNA deacylase.